Here is a 342-residue protein sequence, read N- to C-terminus: Platelet-activating factor receptor (342 aa).

The Extracellular portion of the chain corresponds to 1–16 (MELNSSSRVDSEFRYT). Residue N4 is glycosylated (N-linked (GlcNAc...) asparagine). Residues 17–38 (LFPIVYSIIFVLGIIANGYVLW) traverse the membrane as a helical segment. Over 39–54 (VFARLYPSKKLNEIKI) the chain is Cytoplasmic. The chain crosses the membrane as a helical span at residues 55–74 (FMVNLTVADLLFLITLPLWI). Topologically, residues 75-91 (VYYSNQGNWFLPKFLCN) are extracellular. C90 and C173 form a disulfide bridge. Residues 92 to 113 (LAGCLFFINTYCSVAFLGVITY) form a helical membrane-spanning segment. Residues 114-133 (NRFQAVKYPIKTAQATTRKR) lie on the Cytoplasmic side of the membrane. A helical membrane pass occupies residues 134 to 155 (GIALSLVIWVAIVAAASYFLVM). Over 156–184 (DSTNVVSNKAGSGNITRCFEHYEKGSKPV) the chain is Extracellular. N169 carries N-linked (GlcNAc...) asparagine glycosylation. The chain crosses the membrane as a helical span at residues 185-205 (LIIHICIVLGFFIVFLLILFC). Topologically, residues 206–233 (NLVIIHTLLRQPVKQQRNAEVRRRALWM) are cytoplasmic. The helical transmembrane segment at 234-254 (VCTVLAVFVICFVPHHMVQLP) threads the bilayer. At 255–276 (WTLAELGMWPSSNHQAINDAHQ) the chain is on the extracellular side. Residues 277-296 (VTLCLLSTNCVLDPVIYCFL) form a helical membrane-spanning segment. The Cytoplasmic segment spans residues 297-342 (TKKFRKHLSEKLNIMRSSQKCSRVTTDTGTEMAIPINHTPVNPIKN).

It belongs to the G-protein coupled receptor 1 family. Interacts with ARRB1.

Its subcellular location is the cell membrane. Its function is as follows. Receptor for platelet activating factor, a chemotactic phospholipid mediator that possesses potent inflammatory, smooth-muscle contractile and hypotensive activity. Seems to mediate its action via a G protein that activates a phosphatidylinositol-calcium second messenger system. This Cavia porcellus (Guinea pig) protein is Platelet-activating factor receptor (PTAFR).